Consider the following 432-residue polypeptide: Trigger factor (432 aa).

A PPIase FKBP-type domain is found at 161–246 (DDRVTIDFVG…LKKIENMVLP (86 aa)).

It belongs to the FKBP-type PPIase family. Tig subfamily.

Its subcellular location is the cytoplasm. It catalyses the reaction [protein]-peptidylproline (omega=180) = [protein]-peptidylproline (omega=0). Functionally, involved in protein export. Acts as a chaperone by maintaining the newly synthesized protein in an open conformation. Functions as a peptidyl-prolyl cis-trans isomerase. In Haemophilus influenzae (strain PittEE), this protein is Trigger factor.